Here is a 253-residue protein sequence, read N- to C-terminus: uncharacterized protein (253 aa).

Gly7–Thr14 serves as a coordination point for ATP.

It to M.jannaschii MJ0084 and MJ0823.

This is an uncharacterized protein from Methanocaldococcus jannaschii (strain ATCC 43067 / DSM 2661 / JAL-1 / JCM 10045 / NBRC 100440) (Methanococcus jannaschii).